The chain runs to 156 residues: H/ACA ribonucleoprotein complex subunit NHP2 (156 aa).

It belongs to the eukaryotic ribosomal protein eL8 family. Component of the small nucleolar ribonucleoprotein particles containing H/ACA-type snoRNAs (H/ACA snoRNPs). The protein component of the H/ACA snoRNP contains CBF5, GAR1, NHP2 and NOP10. The complex contains a stable core composed of CBF5 and NOP10, to which GAR1 and NHP2 subsequently bind. Interacts with SHQ1. Interacts with NAF1.

It localises to the nucleus. The protein localises to the nucleolus. Its function is as follows. Non-catalytic component of the H/ACA small nucleolar ribonucleoprotein (H/ACA snoRNP), which catalyzes pseudouridylation of rRNA and is required for ribosome biogenesis. This involves the isomerization of uridine such that the ribose is subsequently attached to C5, instead of the normal N1. Pseudouridine ('psi') residues may serve to stabilize the conformation of rRNAs. The H/ACA snoRNP complex also mediates pseudouridylation of other types of RNAs. The H/ACA snoRNP complex mediates pseudouridylation at position 93 in U2 snRNA. Essential for growth. Directly binds H/ACA snoRNAs. This Saccharomyces cerevisiae (strain ATCC 204508 / S288c) (Baker's yeast) protein is H/ACA ribonucleoprotein complex subunit NHP2 (NHP2).